A 150-amino-acid polypeptide reads, in one-letter code: Small ribosomal subunit protein uS11x (150 aa).

The protein belongs to the universal ribosomal protein uS11 family.

It localises to the cytoplasm. This chain is Small ribosomal subunit protein uS11x (RPS14C), found in Arabidopsis thaliana (Mouse-ear cress).